The following is a 447-amino-acid chain: Cysteine--tRNA ligase (447 aa).

Cys28 provides a ligand contact to Zn(2+). Residues 30–40 (PTVYNYIHVGN) carry the 'HIGH' region motif. Residues Cys211, His236, and Glu240 each contribute to the Zn(2+) site. The short motif at 268 to 272 (KMSKS) is the 'KMSKS' region element. Lys271 is an ATP binding site.

The protein belongs to the class-I aminoacyl-tRNA synthetase family. In terms of assembly, monomer. Zn(2+) serves as cofactor.

It is found in the cytoplasm. It carries out the reaction tRNA(Cys) + L-cysteine + ATP = L-cysteinyl-tRNA(Cys) + AMP + diphosphate. The protein is Cysteine--tRNA ligase of Streptococcus pneumoniae (strain ATCC BAA-255 / R6).